The following is a 498-amino-acid chain: L-xylulose/3-keto-L-gulonate kinase (498 aa).

It belongs to the FGGY kinase family. As to quaternary structure, homodimer.

It carries out the reaction L-xylulose + ATP = L-xylulose 5-phosphate + ADP + H(+). The enzyme catalyses 3-dehydro-L-gulonate + ATP = 3-dehydro-L-gulonate 6-phosphate + ADP + H(+). Its function is as follows. Catalyzes the phosphorylation of L-xylulose and 3-keto-L-gulonate. Is involved in L-lyxose utilization via xylulose, and may also be involved in the utilization of 2,3-diketo-L-gulonate. This is L-xylulose/3-keto-L-gulonate kinase (lyx) from Escherichia coli (strain K12).